The following is a 315-amino-acid chain: Mitochondrial outer membrane import complex protein METAXIN (315 aa).

Methionine 1 is subject to N-acetylmethionine. Residues 157–181 (ENAEQREKQIYKRASEAYEALSTRL) are a coiled coil. Residues 195 to 215 (LDAFLLSHILFIIQALPVTSV) form a helical membrane-spanning segment. The interval 240–277 (ASSSSPSPPLHSFPSSFPRKSSKPKSKPKVEKTEEEKK) is disordered. A compositionally biased stretch (basic and acidic residues) spans 267 to 277 (PKVEKTEEEKK). Residues 284-304 (FFLAAQFLAVVIYVSVMGGGS) form a helical membrane-spanning segment.

The protein belongs to the metaxin family. As to quaternary structure, part of a high molecular weight complex that is distinct from the TOM complex. Interacts with a variety of mitochondrial precursor proteins. Expressed in roots, young cotyledons, flowers and leaves.

It localises to the mitochondrion inner membrane. The protein resides in the mitochondrion outer membrane. Functionally, involved in transport of proteins into the mitochondrion. This is Mitochondrial outer membrane import complex protein METAXIN (MTX1) from Arabidopsis thaliana (Mouse-ear cress).